Consider the following 619-residue polypeptide: MSPYPHLERIGSPADLRATERRELAQVASELRAFLIESVSKTGGHLSSNLGTVELTIALHYVFNTPDDRIVWDVGHQTYGHKILTGRREAMSGLRHWGGISGFPRRCESEYDTFGTAHSSTSISAALGMAVAARDRGEDRRAIAVIGDGAMSAGMAFEALNNAGDMDANLLVILNDNEMSISPPVGALTKILARLMSGSTYNAARRVGEKVLGTVPPMAELARKVEEYAKGMIAPGTLFEEFGFHYYGPIDGHDLDALIPTLQNIRKLKGPQFLHVITKKGQGYKLAEADPILYHGVSKFDHTAGIQTGKSGGKLTYTQVFSDWLCDIAAADPRIVGITPAMREGSGLVEFAQRFPDRYYDVGIAEQHALTFAAGLACEGLKPVVAIYSTFLQRAYDQLIHDIALQNLPVVLAIDRGGLVGADGATHHGAFDLSFLACVPNLVVMAPADENECRQMLYTAVCHDGPTAVRYPRGGGSGVVPLEPMTALPIGKGEIRRHGTRIAVLAFGSMLGVALEVGEALDASVANMRFVKPLDEALIAELAANHALLVTVEENAVIGGAGSEVARFVDTLPQRPRVLRLGLPDRFIDHGDQAQLLASVGLDKTGILAAIEAVYPHNS.

Thiamine diphosphate-binding positions include H76 and 117 to 119; that span reads AHS. D148 lines the Mg(2+) pocket. Residues 149–150, N177, Y284, and E366 each bind thiamine diphosphate; that span reads GA. Residue N177 participates in Mg(2+) binding.

Belongs to the transketolase family. DXPS subfamily. As to quaternary structure, homodimer. Requires Mg(2+) as cofactor. Thiamine diphosphate is required as a cofactor.

The enzyme catalyses D-glyceraldehyde 3-phosphate + pyruvate + H(+) = 1-deoxy-D-xylulose 5-phosphate + CO2. It participates in metabolic intermediate biosynthesis; 1-deoxy-D-xylulose 5-phosphate biosynthesis; 1-deoxy-D-xylulose 5-phosphate from D-glyceraldehyde 3-phosphate and pyruvate: step 1/1. Catalyzes the acyloin condensation reaction between C atoms 2 and 3 of pyruvate and glyceraldehyde 3-phosphate to yield 1-deoxy-D-xylulose-5-phosphate (DXP). The sequence is that of 1-deoxy-D-xylulose-5-phosphate synthase from Azoarcus sp. (strain BH72).